Consider the following 91-residue polypeptide: uncharacterized protein (91 aa).

The protein localises to the plastid. Its subcellular location is the chloroplast. This is an uncharacterized protein from Phalaenopsis aphrodite subsp. formosana (Moth orchid).